A 399-amino-acid chain; its full sequence is Elongation factor Tu (399 aa).

Positions Lys-10–Val-209 constitute a tr-type G domain. The interval Gly-19 to Thr-26 is G1. Gly-19–Thr-26 is a GTP binding site. Thr-26 lines the Mg(2+) pocket. The tract at residues Gly-60 to Ala-64 is G2. The tract at residues Asp-81 to Gly-84 is G3. GTP is bound by residues Asp-81–His-85 and Asn-136–Asp-139. The segment at Asn-136–Asp-139 is G4. The G5 stretch occupies residues Ser-174–Leu-176.

The protein belongs to the TRAFAC class translation factor GTPase superfamily. Classic translation factor GTPase family. EF-Tu/EF-1A subfamily. In terms of assembly, monomer.

It is found in the cytoplasm. It carries out the reaction GTP + H2O = GDP + phosphate + H(+). Its function is as follows. GTP hydrolase that promotes the GTP-dependent binding of aminoacyl-tRNA to the A-site of ribosomes during protein biosynthesis. The sequence is that of Elongation factor Tu from Campylobacter curvus (strain 525.92).